Here is a 1554-residue protein sequence, read N- to C-terminus: Lysine-specific demethylase 5C (1554 aa).

The JmjN domain occupies 14–55 (CPVFEPSWAEFRDPLGYIAKIRPIAEKSGICKIRPPADWQPP). One can recognise an ARID domain in the interval 79 to 169 (TRVKLNYLDQ…IVYPYEMYQS (91 aa)). The segment covering 197–207 (LRQSVQPSKFN) has biased composition (polar residues). Residues 197-227 (LRQSVQPSKFNSYGRRAKRLQPDPEPTEEDI) are disordered. Residues Lys-205, Lys-229, Lys-244, and Lys-274 each participate in a glycyl lysine isopeptide (Lys-Gly) (interchain with G-Cter in SUMO2) cross-link. The disordered stretch occupies residues 284-303 (ESTSPKTFLEGKEELSHSPE). Ser-287 carries the post-translational modification Phosphoserine. Lys-295 participates in a covalent cross-link: Glycyl lysine isopeptide (Lys-Gly) (interchain with G-Cter in SUMO2). Ser-301 and Ser-317 each carry phosphoserine. Residues 326-372 (VCRMCSRGDEDDKLLLCDGCDDNYHIFCLLPPLPEIPKGVWRCPKCV) form a PHD-type 1 zinc finger. Residues 468–634 (EYATSGWNLN…AGRQCIEHYR (167 aa)) enclose the JmjC domain. Fe cation contacts are provided by His-514, Asp-517, and His-602. 2 positions are modified to phosphoserine: Ser-893 and Ser-897. Residue Lys-1127 forms a Glycyl lysine isopeptide (Lys-Gly) (interchain with G-Cter in SUMO2) linkage. A PHD-type 2 zinc finger spans residues 1187–1248 (ICVCGQVPAG…DTKFLCPLCM (62 aa)). Disordered regions lie at residues 1319–1364 (SKPE…EGSG) and 1437–1535 (AERH…APFS). Position 1353 is a phosphoserine (Ser-1353). Residues 1442-1457 (SRTRGRALERRRRRKV) show a composition bias toward basic residues. Residues 1458 to 1475 (DRGGEPDDPAREELEPKR) show a composition bias toward basic and acidic residues. The span at 1482–1497 (EAEEVQEEEELEEETG) shows a compositional bias: acidic residues.

Belongs to the JARID1 histone demethylase family. Part of two distinct complexes, one containing E2F6, and the other containing REST. Interacts with ZMYND8. Requires Fe(2+) as cofactor.

It localises to the nucleus. It carries out the reaction N(6),N(6),N(6)-trimethyl-L-lysyl(4)-[histone H3] + 3 2-oxoglutarate + 3 O2 = L-lysyl(4)-[histone H3] + 3 formaldehyde + 3 succinate + 3 CO2. Functionally, histone demethylase that specifically demethylates 'Lys-4' of histone H3, thereby playing a central role in histone code. Does not demethylate histone H3 'Lys-9', H3 'Lys-27', H3 'Lys-36', H3 'Lys-79' or H4 'Lys-20'. Demethylates trimethylated and dimethylated but not monomethylated H3 'Lys-4'. Participates in transcriptional repression of neuronal genes by recruiting histone deacetylases and REST at neuron-restrictive silencer elements. Represses the CLOCK-BMAL1 heterodimer-mediated transcriptional activation of the core clock component PER2. The sequence is that of Lysine-specific demethylase 5C (Kdm5c) from Mus musculus (Mouse).